The primary structure comprises 344 residues: tRNA(Ile)-lysidine synthase (344 aa).

Residue Ser-43–Ser-48 participates in ATP binding.

This sequence belongs to the tRNA(Ile)-lysidine synthase family.

The protein resides in the cytoplasm. It carries out the reaction cytidine(34) in tRNA(Ile2) + L-lysine + ATP = lysidine(34) in tRNA(Ile2) + AMP + diphosphate + H(+). Its function is as follows. Ligates lysine onto the cytidine present at position 34 of the AUA codon-specific tRNA(Ile) that contains the anticodon CAU, in an ATP-dependent manner. Cytidine is converted to lysidine, thus changing the amino acid specificity of the tRNA from methionine to isoleucine. The protein is tRNA(Ile)-lysidine synthase of Bordetella bronchiseptica (strain ATCC BAA-588 / NCTC 13252 / RB50) (Alcaligenes bronchisepticus).